A 340-amino-acid chain; its full sequence is Protein-arginine kinase (340 aa).

The Phosphagen kinase C-terminal domain occupies 21–242 (VVLSSRIRLA…EQIIMQERVA (222 aa)). Residues 24-28 (SSRIR), His79, Arg113, 164-168 (RASVM), and 195-200 (RGIYGE) each bind ATP.

This sequence belongs to the ATP:guanido phosphotransferase family.

It carries out the reaction L-arginyl-[protein] + ATP = N(omega)-phospho-L-arginyl-[protein] + ADP + H(+). Functionally, catalyzes the specific phosphorylation of arginine residues in proteins. This chain is Protein-arginine kinase, found in Listeria welshimeri serovar 6b (strain ATCC 35897 / DSM 20650 / CCUG 15529 / CIP 8149 / NCTC 11857 / SLCC 5334 / V8).